A 1012-amino-acid chain; its full sequence is Structural polyprotein (1012 aa).

Residue Asp30 participates in a divalent metal cation binding. The Peptidase S50 domain maps to 513-755 (ADKGYEVVAN…AGRQYHLAMA (243 aa)). Ser652 serves as the catalytic Nucleophile. Lys692 is a catalytic residue. A disordered region spans residues 969–1012 (AMEMKHRNPRRALPKPKPKPNAPTQRPPGRLGRWIRTVSDEDLE). Basic residues predominate over residues 975 to 986 (RNPRRALPKPKP). Positions 1003–1012 (IRTVSDEDLE) are interaction with VP1 protein.

Homotrimer. A central divalent metal stabilizes the VP2 trimer. Interacts with host ITGA4/ITGB1. In terms of assembly, homodimer. Interacts (via C-terminus) with VP1 in the cytoplasm. Interacts with VP2. Specific enzymatic cleavages yield mature proteins. The capsid assembly seems to be regulated by polyprotein processing. The protease VP4 cleaves itself off the polyprotein, thus releasing pre-VP2 and VP3 within the infected cell. During capsid assembly, the C-terminus of pre-VP2 is further processed by VP4, giving rise to VP2, the external capsid protein and three small peptides that all stay closely associated with the capsid.

Its subcellular location is the virion. The protein resides in the host cytoplasm. Functionally, capsid protein VP2 self assembles to form an icosahedral capsid with a T=13 symmetry, about 70 nm in diameter, and consisting of 260 VP2 trimers. The capsid encapsulates the genomic dsRNA. VP2 is also involved in attachment and entry into the host cell by interacting with host ITGA4/ITGB1. Its function is as follows. The precursor of VP2 plays an important role in capsid assembly. First, pre-VP2 and VP2 oligomers assemble to form a procapsid. Then, the pre-VP2 intermediates may be processed into VP2 proteins by proteolytic cleavage mediated by VP4 to obtain the mature virion. The final capsid is composed of pentamers and hexamers but VP2 has a natural tendency to assemble into all-pentameric structures. Therefore pre-VP2 may be required to allow formation of the hexameric structures. Protease VP4 is a serine protease that cleaves the polyprotein into its final products. Pre-VP2 is first partially cleaved, and may be completely processed by VP4 upon capsid maturation. In terms of biological role, capsid protein VP3 plays a key role in virion assembly by providing a scaffold for the capsid made of VP2. May self-assemble to form a T=4-like icosahedral inner-capsid composed of at least 180 trimers. Plays a role in genomic RNA packaging by recruiting VP1 into the capsid and interacting with the dsRNA genome segments to form a ribonucleoprotein complex. Additionally, the interaction of the VP3 C-terminal tail with VP1 removes the inherent structural blockade of the polymerase active site. Thus, VP3 can also function as a transcriptional activator. Functionally, structural peptide 1 is a small peptide derived from pre-VP2 C-terminus. It destabilizes and perforates cell membranes, suggesting a role during entry. Its function is as follows. Structural peptide 2 is a small peptide derived from pVP2 C-terminus. It is not essential for the virus viability, but viral growth is affected when missing. Structural peptide 3 is a small peptide derived from pVP2 C-terminus. It is not essential for the virus viability, but viral growth is affected when missing. In terms of biological role, structural peptide 4 is a small peptide derived from pVP2 C-terminus. It is essential for the virus viability. The protein is Structural polyprotein of Avian infectious bursal disease virus (strain Cu-1) (IBDV).